A 444-amino-acid polypeptide reads, in one-letter code: Putative cytochrome P450 120 (444 aa).

Position 391 (Cys391) interacts with heme.

This sequence belongs to the cytochrome P450 family. Requires heme as cofactor.

This is Putative cytochrome P450 120 (cyp120) from Synechocystis sp. (strain ATCC 27184 / PCC 6803 / Kazusa).